Reading from the N-terminus, the 620-residue chain is Sodium-dependent dopamine transporter (620 aa).

Residues 1–56 lie on the Cytoplasmic side of the membrane; it reads MSKSKCSVGLMSSVVAPAKEPNAVGPKEVELILVKEQNGVQLTSSTLTNPRQSPVE. Residues 57–95 form a discontinuously helical membrane-spanning segment; sequence AQDRETWGKKIDFLLSVIGFAVDLANVWRFPYLCYKNGG. Residues G75, A77, V78, D79, and N82 each contribute to the Na(+) site. D79 is a binding site for dopamine. Helical transmembrane passes span 96–127 and 128–171; these read GAFLVPYLLFMVIAGMPLFYMELALGQFNREG and AAGV…FSSF. Dopamine is bound by residues S149 and G153. The Extracellular segment spans residues 172–236; the sequence is TTELPWIHCN…SHGIDDLGPP (65 aa). An intrachain disulfide couples C180 to C189. 3 N-linked (GlcNAc...) asparagine glycosylation sites follow: N181, N188, and N205. The next 2 helical transmembrane spans lie at 237–256 and 257–287; these read RWQLTACLVLVIVLLYFSLW and KGVKTSGKVVWITATMPYVVLTALLLRGVTL. Residues 288–306 are Extracellular-facing; sequence PGAIDGIRAYLSVDFYRLC. A discontinuously helical membrane pass occupies residues 307–335; the sequence is EASVWIDAATQVCFSLGVGFGVLIAFSSY. Residue Q317 participates in chloride binding. F320 serves as a coordination point for dopamine. Residues S321 and N353 each coordinate Na(+). A chloride-binding site is contributed by S321. A helical transmembrane segment spans residues 336–376; that stretch reads NKFTNNCYRDAIVTTSINSLTSFSSGFVVFSFLGYMAQKHS. S357 is a chloride binding site. The Extracellular segment spans residues 377–400; the sequence is VPIGDVAKDGPGLIFIIYPEAIAT. 3 helical membrane-spanning segments follow: residues 401-442, 443-466, and 467-499; these read LPLS…QLLH, RHRELFTLFIVLATFLLSLFCVTN, and GGIYVFTLLDHFAAGTSILFGVLIEAIGVAWFY. Positions 418, 421, and 422 each coordinate Na(+). S422 and A423 together coordinate dopamine. Residues 500-516 lie on the Cytoplasmic side of the membrane; it reads GVGQFSDDIQQMTGQRP. Residues 517–542 traverse the membrane as a helical segment; it reads SLYWRLCWKLVSPCFLLFVVVVSIVT. Over 543-553 the chain is Extracellular; the sequence is FRPPHYGAYIF. Residues 554-583 form a helical membrane-spanning segment; it reads PDWANALGWVIATSSMAMVPIYAAYKFCSL. Positions 561-590 are interaction with TGFB1I1; it reads GWVIATSSMAMVPIYAAYKFCSLPGSFREK. The Cytoplasmic portion of the chain corresponds to 584–620; it reads PGSFREKLAYAIAPEKDRELVDRGEVRQFTLRHWLKV.

The protein belongs to the sodium:neurotransmitter symporter (SNF) (TC 2.A.22) family. SLC6A3 subfamily. As to quaternary structure, monomer. Homooligomer; disulfide-linked. Interacts with PRKCABP and TGFB1I1. Interacts (via N-terminus) with SYNGR3 (via N-terminus). Interacts with SLC18A2. Interacts with TOR1A (ATP-bound); TOR1A regulates SLC6A3 subcellular location. Interacts with alpha-synuclein/SNCA. Interacts with SEPTIN4. Highly expressed in substantia nigra. Expressed in axonal varicosities in dopaminergic nerve terminals (at protein level). Expressed in the striatum (at protein level).

Its subcellular location is the cell membrane. The protein resides in the cell projection. The protein localises to the neuron projection. It localises to the axon. The catalysed reaction is dopamine(out) + chloride(out) + Na(+)(out) = dopamine(in) + chloride(in) + Na(+)(in). It carries out the reaction dopamine(out) + chloride(out) + 2 Na(+)(out) = dopamine(in) + chloride(in) + 2 Na(+)(in). It catalyses the reaction (R)-noradrenaline(out) + chloride(out) + Na(+)(out) = (R)-noradrenaline(in) + chloride(in) + Na(+)(in). Inhibited by cocaine, which occupies the same binding site as dopamine. Inhibited by zinc ions. Enhanced by the antibiotic valinomycin. Inhibited by benztropine. Inhibited by GBR 12909 dihydrochloride and amphetamine. Inhibited by mazindol, GBR 12783 dihydrochloride, nomifensine, diclofensine, amfonelic acid, Lu 19005, Win-35428, bupropion and ritalin. Its function is as follows. Mediates sodium- and chloride-dependent transport of dopamine. Also mediates sodium- and chloride-dependent transport of norepinephrine (also known as noradrenaline). Regulator of light-dependent retinal hyaloid vessel regression, downstream of OPN5 signaling. The sequence is that of Sodium-dependent dopamine transporter (SLC6A3) from Homo sapiens (Human).